We begin with the raw amino-acid sequence, 261 residues long: Thioesterase TesA (261 aa).

Residues Ser-104, Asp-208, and His-236 contribute to the active site.

The protein belongs to the thioesterase family.

The enzyme catalyses a fatty acyl-CoA + H2O = a fatty acid + CoA + H(+). Its function is as follows. Involved in the synthesis of both phthiocerol dimycocerosates (PDIMs) and phenolic glycolipids (PGLs), which are structurally related lipids non-covalently bound to the outer cell wall layer of M.tuberculosis and are important virulence factors. The protein is Thioesterase TesA (tesA) of Mycobacterium leprae (strain TN).